The following is a 222-amino-acid chain: Uracil-DNA glycosylase (222 aa).

The active-site Proton acceptor is the Asp61.

Belongs to the uracil-DNA glycosylase (UDG) superfamily. UNG family.

It is found in the cytoplasm. The enzyme catalyses Hydrolyzes single-stranded DNA or mismatched double-stranded DNA and polynucleotides, releasing free uracil.. Excises uracil residues from the DNA which can arise as a result of misincorporation of dUMP residues by DNA polymerase or due to deamination of cytosine. The chain is Uracil-DNA glycosylase from Aeromonas hydrophila subsp. hydrophila (strain ATCC 7966 / DSM 30187 / BCRC 13018 / CCUG 14551 / JCM 1027 / KCTC 2358 / NCIMB 9240 / NCTC 8049).